The following is a 349-amino-acid chain: MNTAAIDQTNARSLDSTTASMVDPFGRAVTYLRVSVTDRCDFRCTYCMAEHMTFLPKKDLLTLEELHRLCSAFIAKGVRKLRLTGGEPLVRKNIMFLIRELGKEIEAGRLDELTLTTNGSQLSKFAAELVDCGVRRINVSLDTLDPDKFRQITRWGELTKVLEGIDAALAAGLKVKINAVALKDFNDAEIPELMRWAHGRGMDLTLIETMPMGEVDEDRTDHYLPLSEMRKRLEADFTLKDMSYRTGGPARYVDVLETGGRLGLITPMTHNFCESCNRVRLTCTGTLYMCLGQNDAADLRSALRATEDDAYLAQVIDDAISRKPKGHDFIIDREHNRPAVARHMSVTGG.

The region spanning 24 to 249 is the Radical SAM core domain; it reads PFGRAVTYLR…KDMSYRTGGP (226 aa). Arg33 serves as a coordination point for GTP. [4Fe-4S] cluster contacts are provided by Cys40 and Cys44. S-adenosyl-L-methionine is bound at residue Tyr46. Cys47 provides a ligand contact to [4Fe-4S] cluster. Arg82 contributes to the GTP binding site. Residue Gly86 coordinates S-adenosyl-L-methionine. Thr116 contacts GTP. Ser140 lines the S-adenosyl-L-methionine pocket. Lys176 is a GTP binding site. S-adenosyl-L-methionine is bound at residue Met210. [4Fe-4S] cluster contacts are provided by Cys273 and Cys276. Residue 278–280 participates in GTP binding; it reads RVR. Cys290 is a binding site for [4Fe-4S] cluster.

The protein belongs to the radical SAM superfamily. MoaA family. In terms of assembly, monomer and homodimer. Requires [4Fe-4S] cluster as cofactor.

It carries out the reaction GTP + AH2 + S-adenosyl-L-methionine = (8S)-3',8-cyclo-7,8-dihydroguanosine 5'-triphosphate + 5'-deoxyadenosine + L-methionine + A + H(+). Its pathway is cofactor biosynthesis; molybdopterin biosynthesis. Catalyzes the cyclization of GTP to (8S)-3',8-cyclo-7,8-dihydroguanosine 5'-triphosphate. The protein is GTP 3',8-cyclase of Sinorhizobium medicae (strain WSM419) (Ensifer medicae).